We begin with the raw amino-acid sequence, 230 residues long: MKLYVVPTPIGNLEDITIRAINILKSVKFIACEDTRRIQILLKHYNIEGKTLLSYYHPKEAIQIRKIISLIRKDEDVALVSDAGTPSISDPGFKLINACIKEDIPVEVLPGPCALITALVGSGLPTHSFMFLGFAPRKSQESFYKEVFSSDTGSYILYESPQRILDTLELISHIEPNITVAIARELTKMHEEYIRGNIKDVIEELKKRNNIKGEIVLVLSKENTLYQESL.

The protein belongs to the methyltransferase superfamily. RsmI family.

The protein localises to the cytoplasm. It carries out the reaction cytidine(1402) in 16S rRNA + S-adenosyl-L-methionine = 2'-O-methylcytidine(1402) in 16S rRNA + S-adenosyl-L-homocysteine + H(+). Its function is as follows. Catalyzes the 2'-O-methylation of the ribose of cytidine 1402 (C1402) in 16S rRNA. The protein is Ribosomal RNA small subunit methyltransferase I of Hydrogenobaculum sp. (strain Y04AAS1).